The following is a 268-amino-acid chain: Undecaprenyl-diphosphatase (268 aa).

A run of 8 helical transmembrane segments spans residues Ser-4 to Val-24, Ile-50 to Ile-70, Ala-84 to Ile-104, Phe-109 to Val-129, Val-144 to Val-164, Ala-184 to Leu-204, Gly-214 to Val-234, and Gly-245 to Leu-265.

The protein belongs to the UppP family.

It is found in the cell inner membrane. It carries out the reaction di-trans,octa-cis-undecaprenyl diphosphate + H2O = di-trans,octa-cis-undecaprenyl phosphate + phosphate + H(+). Catalyzes the dephosphorylation of undecaprenyl diphosphate (UPP). Confers resistance to bacitracin. The chain is Undecaprenyl-diphosphatase from Cereibacter sphaeroides (strain ATCC 17025 / ATH 2.4.3) (Rhodobacter sphaeroides).